A 353-amino-acid chain; its full sequence is Photosystem II protein D1 (353 aa).

Residue threonine 2 is modified to N-acetylthreonine. At threonine 2 the chain carries Phosphothreonine. Helical transmembrane passes span 29 to 46, 118 to 133, and 142 to 156; these read YIGW…TATS, HFLL…EWEL, and WIAV…AATA. Histidine 118 provides a ligand contact to chlorophyll a. Residue tyrosine 126 coordinates pheophytin a. Aspartate 170 and glutamate 189 together coordinate [CaMn4O5] cluster. The chain crosses the membrane as a helical span at residues 197-218; that stretch reads FHMLGVAGVFGGSLFSAMHGSL. Histidine 198 is a binding site for chlorophyll a. Residues histidine 215 and 264 to 265 each bind a quinone; that span reads SF. Histidine 215 serves as a coordination point for Fe cation. A Fe cation-binding site is contributed by histidine 272. Residues 274–288 traverse the membrane as a helical segment; it reads FLAAWPVVGIWFTAL. Residues histidine 332, glutamate 333, aspartate 342, and alanine 344 each contribute to the [CaMn4O5] cluster site. Residues 345–353 constitute a propeptide that is removed on maturation; sequence ALEVPSLNG.

Belongs to the reaction center PufL/M/PsbA/D family. In terms of assembly, PSII is composed of 1 copy each of membrane proteins PsbA, PsbB, PsbC, PsbD, PsbE, PsbF, PsbH, PsbI, PsbJ, PsbK, PsbL, PsbM, PsbT, PsbX, PsbY, PsbZ, Psb30/Ycf12, at least 3 peripheral proteins of the oxygen-evolving complex and a large number of cofactors. It forms dimeric complexes. The cofactor is The D1/D2 heterodimer binds P680, chlorophylls that are the primary electron donor of PSII, and subsequent electron acceptors. It shares a non-heme iron and each subunit binds pheophytin, quinone, additional chlorophylls, carotenoids and lipids. D1 provides most of the ligands for the Mn4-Ca-O5 cluster of the oxygen-evolving complex (OEC). There is also a Cl(-1) ion associated with D1 and D2, which is required for oxygen evolution. The PSII complex binds additional chlorophylls, carotenoids and specific lipids.. Tyr-161 forms a radical intermediate that is referred to as redox-active TyrZ, YZ or Y-Z. In terms of processing, C-terminally processed by CTPA; processing is essential to allow assembly of the oxygen-evolving complex and thus photosynthetic growth.

Its subcellular location is the plastid. It is found in the chloroplast thylakoid membrane. It carries out the reaction 2 a plastoquinone + 4 hnu + 2 H2O = 2 a plastoquinol + O2. Functionally, photosystem II (PSII) is a light-driven water:plastoquinone oxidoreductase that uses light energy to abstract electrons from H(2)O, generating O(2) and a proton gradient subsequently used for ATP formation. It consists of a core antenna complex that captures photons, and an electron transfer chain that converts photonic excitation into a charge separation. The D1/D2 (PsbA/PsbD) reaction center heterodimer binds P680, the primary electron donor of PSII as well as several subsequent electron acceptors. This chain is Photosystem II protein D1, found in Oryza nivara (Indian wild rice).